Consider the following 455-residue polypeptide: Alpha-1,3/1,6-mannosyltransferase ALG2 (455 aa).

A helical transmembrane segment spans residues 73–95 (FGRFYILCAILRQFVLVASLILW). Asn138 carries N-linked (GlcNAc...) asparagine glycosylation. The helical transmembrane segment at 434-453 (GAVYLLGAIGVLFACIIYCI) threads the bilayer.

It belongs to the glycosyltransferase group 1 family. Glycosyltransferase 4 subfamily.

The protein localises to the endoplasmic reticulum membrane. It catalyses the reaction a beta-D-Man-(1-&gt;4)-beta-D-GlcNAc-(1-&gt;4)-alpha-D-GlcNAc-diphospho-di-trans,poly-cis-dolichol + GDP-alpha-D-mannose = an alpha-D-Man-(1-&gt;3)-beta-D-Man-(1-&gt;4)-beta-D-GlcNAc-(1-&gt;4)-alpha-D-GlcNAc-diphospho-di-trans,poly-cis-dolichol + GDP + H(+). It carries out the reaction an alpha-D-Man-(1-&gt;3)-beta-D-Man-(1-&gt;4)-beta-D-GlcNAc-(1-&gt;4)-alpha-D-GlcNAc-diphospho-di-trans,poly-cis-dolichol + GDP-alpha-D-mannose = an alpha-D-Man-(1-&gt;3)-[alpha-D-Man-(1-&gt;6)]-beta-D-Man-(1-&gt;4)-beta-D-GlcNAc-(1-&gt;4)-alpha-D-GlcNAc-diphospho-di-trans,poly-cis-dolichol + GDP + H(+). The protein operates within protein modification; protein glycosylation. Its function is as follows. Mannosylates Man(2)GlcNAc(2)-dolichol diphosphate and Man(1)GlcNAc(2)-dolichol diphosphate to form Man(3)GlcNAc(2)-dolichol diphosphate. The polypeptide is Alpha-1,3/1,6-mannosyltransferase ALG2 (ALG2) (Rhizomucor pusillus).